The primary structure comprises 1125 residues: Speract receptor (1125 aa).

Residues 1–21 (MAHARHLFLFMVAFTITMVIA) form the signal peptide. The Extracellular portion of the chain corresponds to 22–510 (RLDFNPTIIN…GELCTNWALY (489 aa)). N-linked (GlcNAc...) asparagine glycans are attached at residues asparagine 185 and asparagine 409. A helical transmembrane segment spans residues 511-531 (LGASIPTFLIIFGGLIGFFIY). Residues 532–1125 (RKRAYEAALD…AANRVIPDDV (594 aa)) are Cytoplasmic-facing. In terms of domain architecture, Protein kinase spans 571–839 (MSAISVISNA…PNIMAVRTML (269 aa)). The 131-residue stretch at 914 to 1044 (SIFFSDIVGF…DTVNTASRME (131 aa)) folds into the Guanylate cyclase domain.

This sequence belongs to the adenylyl cyclase class-4/guanylyl cyclase family.

The protein localises to the membrane. It carries out the reaction GTP = 3',5'-cyclic GMP + diphosphate. Its function is as follows. Implicated as a cell-surface receptor on spermatozoa for 'speract' a chemotactic peptide, and on various other cells as a receptor for atrial natriuretic peptide. The sequence is that of Speract receptor from Strongylocentrotus purpuratus (Purple sea urchin).